The primary structure comprises 219 residues: Casparian strip membrane protein 3 (219 aa).

The segment at 1–43 (MDPGREDEVPLAATSPESRRTRSNGRGKATVGDAPPPAETVVS) is disordered. The Cytoplasmic segment spans residues 1–57 (MDPGREDEVPLAATSPESRRTRSNGRGKATVGDAPPPAETVVSTKAAPLPTGGWKKG). A helical membrane pass occupies residues 58-78 (IAILDFILRLGAIGAAMGASI). The Extracellular segment spans residues 79 to 108 (LMGTNEQILPFFTQFLQFHAQWDDFPVFKL). Residues 109 to 129 (FVVLNALAGGFLILSLPLSIV) form a helical membrane-spanning segment. The Cytoplasmic segment spans residues 130–147 (CIVRPLAVGPRFLLLITD). Residues 148–168 (LVNMATVIAAASAAAAIVYVA) traverse the membrane as a helical segment. Topologically, residues 169-193 (HNGSQDANWIAICQQFTDFCQGTSE) are extracellular. N-linked (GlcNAc...) asparagine glycosylation occurs at Asn-170. Residues 194-214 (AVVVSFVAAVFLVCLIVVSTL) form a helical membrane-spanning segment. Residues 215 to 219 (ALKRT) lie on the Cytoplasmic side of the membrane.

This sequence belongs to the Casparian strip membrane proteins (CASP) family. As to quaternary structure, homodimer and heterodimers.

Its subcellular location is the cell membrane. Regulates membrane-cell wall junctions and localized cell wall deposition. Required for establishment of the Casparian strip membrane domain (CSD) and the subsequent formation of Casparian strips, a cell wall modification of the root endodermis that determines an apoplastic barrier between the intraorganismal apoplasm and the extraorganismal apoplasm and prevents lateral diffusion. The chain is Casparian strip membrane protein 3 from Lotus japonicus (Lotus corniculatus var. japonicus).